Reading from the N-terminus, the 217-residue chain is UPF0711 protein C18orf21 homolog (217 aa).

Ser-126 is subject to Phosphoserine. Thr-130 and Thr-139 each carry phosphothreonine. The disordered stretch occupies residues 131-190; the sequence is AANKASPKTPKRTAPGSANLGQSTNGSKGKSPSLTIRTPTSGQSTPICSSRNGSKRKKHF. The span at 149–182 shows a compositional bias: polar residues; sequence NLGQSTNGSKGKSPSLTIRTPTSGQSTPICSSRN.

The protein belongs to the UPF0711 family.

The chain is UPF0711 protein C18orf21 homolog from Mus musculus (Mouse).